Reading from the N-terminus, the 210-residue chain is Na(+)-translocating NADH-quinone reductase subunit D (210 aa).

Helical transmembrane passes span Val42–Ile62, Ile66–Val86, Val103–Met123, Phe131–Phe151, Leu154–Trp174, and Asn178–Val198.

This sequence belongs to the NqrDE/RnfAE family. In terms of assembly, composed of six subunits; NqrA, NqrB, NqrC, NqrD, NqrE and NqrF.

The protein localises to the cell inner membrane. It carries out the reaction a ubiquinone + n Na(+)(in) + NADH + H(+) = a ubiquinol + n Na(+)(out) + NAD(+). In terms of biological role, NQR complex catalyzes the reduction of ubiquinone-1 to ubiquinol by two successive reactions, coupled with the transport of Na(+) ions from the cytoplasm to the periplasm. NqrA to NqrE are probably involved in the second step, the conversion of ubisemiquinone to ubiquinol. The chain is Na(+)-translocating NADH-quinone reductase subunit D from Psychromonas ingrahamii (strain DSM 17664 / CCUG 51855 / 37).